The sequence spans 426 residues: Elongation factor Tu, mitochondrial (426 aa).

The transit peptide at 1–27 directs the protein to the mitochondrion; that stretch reads MFKNLAGSFRAVSRVAFKTRPSLVRSY. In terms of domain architecture, tr-type G spans 34–230; sequence KPHVNIGTIG…AVDEHIPTPT (197 aa). Residues 43-50 are G1; the sequence is GHVDHGKT. Position 43 to 50 (43 to 50) interacts with GTP; the sequence is GHVDHGKT. Residues 84–88 form a G2 region; the sequence is GITIS. The segment at 105–108 is G3; the sequence is DCPG. Residues 105-109 and 160-163 each bind GTP; these read DCPGH and NKVD. The G4 stretch occupies residues 160–163; the sequence is NKVD. The interval 198–200 is G5; it reads SAL.

It belongs to the TRAFAC class translation factor GTPase superfamily. Classic translation factor GTPase family. EF-Tu/EF-1A subfamily.

The protein localises to the mitochondrion. Its pathway is protein biosynthesis; polypeptide chain elongation. Functionally, G-protein that, in its active GTP-bound form, binds to and delivers aminoacyl-tRNA to the A-site of ribosomes during protein biosynthesis. In the presence of a correct codon-anticodon match between the aminoacyl-tRNA and the A-site codon of the ribosome-bound mRNA, the ribosome acts as a GTPase activator and the GTP is hydrolyzed. The inactive GDP-bound form leaves the ribosome and must be recycled before binding another molecule of aminoacyl-tRNA. Required for mitochondrial protein biosynthesis and maintenance of mitochondrial DNA. This chain is Elongation factor Tu, mitochondrial (TUF1), found in Meyerozyma guilliermondii (strain ATCC 6260 / CBS 566 / DSM 6381 / JCM 1539 / NBRC 10279 / NRRL Y-324) (Yeast).